The primary structure comprises 156 residues: Small ribosomal subunit protein uS7 (156 aa).

It belongs to the universal ribosomal protein uS7 family. Part of the 30S ribosomal subunit. Contacts proteins S9 and S11.

Functionally, one of the primary rRNA binding proteins, it binds directly to 16S rRNA where it nucleates assembly of the head domain of the 30S subunit. Is located at the subunit interface close to the decoding center, probably blocks exit of the E-site tRNA. This Lacticaseibacillus casei (strain BL23) (Lactobacillus casei) protein is Small ribosomal subunit protein uS7.